The following is a 652-amino-acid chain: Threonine--tRNA ligase (652 aa).

The region spanning 1–63 (MAEISLTFPD…TESGDFQLIT (63 aa)) is the TGS domain. The interval 246-545 (DHRVIGRDLD…LIEMYKGAFP (300 aa)) is catalytic. Zn(2+) is bound by residues cysteine 340, histidine 391, and histidine 522.

Belongs to the class-II aminoacyl-tRNA synthetase family. In terms of assembly, homodimer. Zn(2+) serves as cofactor.

The protein localises to the cytoplasm. It carries out the reaction tRNA(Thr) + L-threonine + ATP = L-threonyl-tRNA(Thr) + AMP + diphosphate + H(+). Its function is as follows. Catalyzes the attachment of threonine to tRNA(Thr) in a two-step reaction: L-threonine is first activated by ATP to form Thr-AMP and then transferred to the acceptor end of tRNA(Thr). Also edits incorrectly charged L-seryl-tRNA(Thr). This Leuconostoc mesenteroides subsp. mesenteroides (strain ATCC 8293 / DSM 20343 / BCRC 11652 / CCM 1803 / JCM 6124 / NCDO 523 / NBRC 100496 / NCIMB 8023 / NCTC 12954 / NRRL B-1118 / 37Y) protein is Threonine--tRNA ligase.